Here is a 285-residue protein sequence, read N- to C-terminus: Tropomyosin (285 aa).

A coiled-coil region spans residues 1 to 273; that stretch reads MDAIKKKMQA…KEKYREIGDD (273 aa).

It belongs to the tropomyosin family. As to quaternary structure, homodimer.

In terms of biological role, tropomyosin, in association with the troponin complex, plays a central role in the calcium dependent regulation of muscle contraction. The chain is Tropomyosin from Chironomus kiiensis (Midge).